Reading from the N-terminus, the 168-residue chain is DNA damage-inducible transcript 3 protein (168 aa).

Residues 10–18 (FETVSSWEL) form an interaction with TRIB3 region. The tract at residues 10–26 (FETVSSWELEAWYEDLQ) is N-terminal. A phosphoserine; by CK2 mark is found at Ser-14, Ser-15, Ser-30, and Ser-31. The segment at 34–130 (IGGTYISSPG…EKEQENERKV (97 aa)) is disordered. A compositionally biased stretch (low complexity) spans 73–88 (TSTSQSPRSPDSSQSS). 2 positions are modified to phosphoserine; by MAPK14: Ser-78 and Ser-81. Positions 98–161 (QGRTRKRKQS…ETTRRALIDR (64 aa)) constitute a bZIP domain. Residues 100–129 (RTRKRKQSGQCAARAGKQRMKEKEQENERK) form a basic motif region. The segment covering 118-130 (RMKEKEQENERKV) has biased composition (basic and acidic residues). The interval 133–147 (LAEENERLKLEIERL) is leucine-zipper.

This sequence belongs to the bZIP family. In terms of assembly, heterodimer. Interacts with TCF7L2/TCF4, EP300/P300, HDAC1, HDAC5 and HDAC6. Interacts with TRIB3 which blocks its association with EP300/P300. Interacts with FOXO3, CEBPB and ATF4. In terms of processing, ubiquitinated, leading to its degradation by the proteasome. Phosphorylation at serine residues by MAPK14 enhances its transcriptional activation activity while phosphorylation at serine residues by CK2 inhibits its transcriptional activation activity.

It is found in the cytoplasm. It localises to the nucleus. In terms of biological role, multifunctional transcription factor in ER stress response. Plays an essential role in the response to a wide variety of cell stresses and induces cell cycle arrest and apoptosis in response to ER stress. Plays a dual role both as an inhibitor of CCAAT/enhancer-binding protein (C/EBP) function and as an activator of other genes. Acts as a dominant-negative regulator of C/EBP-induced transcription: dimerizes with members of the C/EBP family, impairs their association with C/EBP binding sites in the promoter regions, and inhibits the expression of C/EBP regulated genes. Positively regulates the transcription of TRIB3, IL6, IL8, IL23, TNFRSF10B/DR5, PPP1R15A/GADD34, BBC3/PUMA, BCL2L11/BIM and ERO1L. Negatively regulates; expression of BCL2 and MYOD1, ATF4-dependent transcriptional activation of asparagine synthetase (ASNS), CEBPA-dependent transcriptional activation of hepcidin (HAMP) and CEBPB-mediated expression of peroxisome proliferator-activated receptor gamma (PPARG). Inhibits the canonical Wnt signaling pathway by binding to TCF7L2/TCF4, impairing its DNA-binding properties and repressing its transcriptional activity. Plays a regulatory role in the inflammatory response through the induction of caspase-11 (CASP4/CASP11) which induces the activation of caspase-1 (CASP1) and both these caspases increase the activation of pro-IL1B to mature IL1B which is involved in the inflammatory response. Acts as a major regulator of postnatal neovascularization through regulation of endothelial nitric oxide synthase (NOS3)-related signaling. The protein is DNA damage-inducible transcript 3 protein (Ddit3) of Rattus norvegicus (Rat).